Consider the following 561-residue polypeptide: uncharacterized protein (561 aa).

Residues 187-217 adopt a coiled-coil conformation; sequence DDEELSEEEILNRIDKLQIELEQVIGKQKNI.

This is an uncharacterized protein from Dictyostelium discoideum (Social amoeba).